The primary structure comprises 326 residues: Malate dehydrogenase (326 aa).

NAD(+) is bound at residue 12–18; it reads GGTGQIA. Residues R93 and R99 each coordinate substrate. NAD(+) is bound by residues N106, Q113, and 130–132; that span reads VGN. Residues N132 and R163 each contribute to the substrate site. The Proton acceptor role is filled by H188.

This sequence belongs to the LDH/MDH superfamily. MDH type 2 family.

The catalysed reaction is (S)-malate + NAD(+) = oxaloacetate + NADH + H(+). Its function is as follows. Catalyzes the reversible oxidation of malate to oxaloacetate. This Chlamydia trachomatis serovar D (strain ATCC VR-885 / DSM 19411 / UW-3/Cx) protein is Malate dehydrogenase.